A 100-amino-acid chain; its full sequence is Large ribosomal subunit protein bL21 (100 aa).

Belongs to the bacterial ribosomal protein bL21 family. Part of the 50S ribosomal subunit. Contacts protein L20.

In terms of biological role, this protein binds to 23S rRNA in the presence of protein L20. In Mycoplasma capricolum subsp. capricolum (strain California kid / ATCC 27343 / NCTC 10154), this protein is Large ribosomal subunit protein bL21.